Consider the following 357-residue polypeptide: Glutamate 5-kinase (357 aa).

Lys7 is an ATP binding site. Positions 43, 130, and 142 each coordinate substrate. Residue 162–163 participates in ATP binding; sequence TD. The 78-residue stretch at 270–347 folds into the PUA domain; it reads QGELTLDAGA…PAAGPSPVVV (78 aa).

This sequence belongs to the glutamate 5-kinase family.

The protein resides in the cytoplasm. The enzyme catalyses L-glutamate + ATP = L-glutamyl 5-phosphate + ADP. The protein operates within amino-acid biosynthesis; L-proline biosynthesis; L-glutamate 5-semialdehyde from L-glutamate: step 1/2. Functionally, catalyzes the transfer of a phosphate group to glutamate to form L-glutamate 5-phosphate. The polypeptide is Glutamate 5-kinase (Parasynechococcus marenigrum (strain WH8102)).